The primary structure comprises 415 residues: Acetate kinase (415 aa).

Asn8 is a Mg(2+) binding site. Lys15 serves as a coordination point for ATP. Arg106 provides a ligand contact to substrate. The Proton donor/acceptor role is filled by Asp163. Residues 222-226, 296-298, and 344-348 each bind ATP; these read HLGNG, DLR, and GIGEN. Glu397 is a Mg(2+) binding site.

It belongs to the acetokinase family. In terms of assembly, homodimer. Mg(2+) is required as a cofactor. Mn(2+) serves as cofactor.

Its subcellular location is the cytoplasm. The catalysed reaction is acetate + ATP = acetyl phosphate + ADP. It functions in the pathway metabolic intermediate biosynthesis; acetyl-CoA biosynthesis; acetyl-CoA from acetate: step 1/2. Functionally, catalyzes the formation of acetyl phosphate from acetate and ATP. Can also catalyze the reverse reaction. The chain is Acetate kinase from Thermosynechococcus vestitus (strain NIES-2133 / IAM M-273 / BP-1).